The primary structure comprises 247 residues: tRNA pseudouridine synthase A (247 aa).

Aspartate 52 serves as the catalytic Nucleophile. Residue tyrosine 110 coordinates substrate.

This sequence belongs to the tRNA pseudouridine synthase TruA family. As to quaternary structure, homodimer.

The enzyme catalyses uridine(38/39/40) in tRNA = pseudouridine(38/39/40) in tRNA. Its function is as follows. Formation of pseudouridine at positions 38, 39 and 40 in the anticodon stem and loop of transfer RNAs. In Hyphomonas neptunium (strain ATCC 15444), this protein is tRNA pseudouridine synthase A.